The chain runs to 257 residues: Large ribosomal subunit protein uL2 (257 aa).

Residues 207–257 form a disordered region; the sequence is VDHPHGGGNHQHVGHPTTLKRSSPPGQKAGKVAARRTGLIRGGNKEGAADN.

The protein belongs to the universal ribosomal protein uL2 family. As to quaternary structure, component of the large ribosomal subunit.

The protein localises to the cytoplasm. Component of the large ribosomal subunit. The ribosome is a large ribonucleoprotein complex responsible for the synthesis of proteins in the cell. The chain is Large ribosomal subunit protein uL2 (RPL8) from Entamoeba histolytica (strain ATCC 30459 / HM-1:IMSS / ABRM).